The chain runs to 364 residues: Probable methyltransferase ICS2 (364 aa).

Positions 18, 61, 98, 99, 133, and 134 each coordinate S-adenosyl-L-homocysteine. 4 residues coordinate Mg(2+): Asn172, Asp258, Phe260, and Asn261.

The protein belongs to the methyltransferase superfamily. Type-7 methyltransferase family. Requires Mg(2+) as cofactor.

Functionally, no detectable N-methyltransferase activity. The polypeptide is Probable methyltransferase ICS2 (Camellia irrawadiensis (Burmese tea)).